The chain runs to 312 residues: Acetyl-coenzyme A carboxylase carboxyl transferase subunit alpha (312 aa).

The CoA carboxyltransferase C-terminal domain maps to 36–286 (NLEKEISKTY…ADYVKKSLNE (251 aa)).

Belongs to the AccA family. As to quaternary structure, acetyl-CoA carboxylase is a heterohexamer composed of biotin carboxyl carrier protein (AccB), biotin carboxylase (AccC) and two subunits each of ACCase subunit alpha (AccA) and ACCase subunit beta (AccD).

It localises to the cytoplasm. It catalyses the reaction N(6)-carboxybiotinyl-L-lysyl-[protein] + acetyl-CoA = N(6)-biotinyl-L-lysyl-[protein] + malonyl-CoA. It participates in lipid metabolism; malonyl-CoA biosynthesis; malonyl-CoA from acetyl-CoA: step 1/1. Component of the acetyl coenzyme A carboxylase (ACC) complex. First, biotin carboxylase catalyzes the carboxylation of biotin on its carrier protein (BCCP) and then the CO(2) group is transferred by the carboxyltransferase to acetyl-CoA to form malonyl-CoA. The chain is Acetyl-coenzyme A carboxylase carboxyl transferase subunit alpha from Campylobacter jejuni subsp. doylei (strain ATCC BAA-1458 / RM4099 / 269.97).